A 119-amino-acid chain; its full sequence is NADH-quinone oxidoreductase subunit A (119 aa).

3 consecutive transmembrane segments (helical) span residues 7–27, 63–83, and 88–108; these read FPVL…MTIG, LIAI…PWGV, and IGWP…VGFV.

It belongs to the complex I subunit 3 family. In terms of assembly, NDH-1 is composed of 14 different subunits. Subunits NuoA, H, J, K, L, M, N constitute the membrane sector of the complex.

The protein resides in the cell inner membrane. The catalysed reaction is a quinone + NADH + 5 H(+)(in) = a quinol + NAD(+) + 4 H(+)(out). In terms of biological role, NDH-1 shuttles electrons from NADH, via FMN and iron-sulfur (Fe-S) centers, to quinones in the respiratory chain. The immediate electron acceptor for the enzyme in this species is believed to be ubiquinone. Couples the redox reaction to proton translocation (for every two electrons transferred, four hydrogen ions are translocated across the cytoplasmic membrane), and thus conserves the redox energy in a proton gradient. The protein is NADH-quinone oxidoreductase subunit A of Ralstonia pickettii (strain 12J).